The primary structure comprises 510 residues: NAD(P)H-quinone oxidoreductase subunit 2 A, chloroplastic (510 aa).

Transmembrane regions (helical) follow at residues leucine 31–threonine 51, isoleucine 57–phenylalanine 77, isoleucine 99–isoleucine 119, methionine 124–cysteine 144, leucine 149–tyrosine 169, leucine 184–leucine 204, isoleucine 229–phenylalanine 249, proline 261–threonine 281, tryptophan 295–isoleucine 315, methionine 323–aspartate 343, tyrosine 354–leucine 374, alanine 395–phenylalanine 415, leucine 418–leucine 438, and methionine 484–isoleucine 504.

The protein belongs to the complex I subunit 2 family. In terms of assembly, NDH is composed of at least 16 different subunits, 5 of which are encoded in the nucleus.

The protein localises to the plastid. It localises to the chloroplast thylakoid membrane. It catalyses the reaction a plastoquinone + NADH + (n+1) H(+)(in) = a plastoquinol + NAD(+) + n H(+)(out). It carries out the reaction a plastoquinone + NADPH + (n+1) H(+)(in) = a plastoquinol + NADP(+) + n H(+)(out). NDH shuttles electrons from NAD(P)H:plastoquinone, via FMN and iron-sulfur (Fe-S) centers, to quinones in the photosynthetic chain and possibly in a chloroplast respiratory chain. The immediate electron acceptor for the enzyme in this species is believed to be plastoquinone. Couples the redox reaction to proton translocation, and thus conserves the redox energy in a proton gradient. This chain is NAD(P)H-quinone oxidoreductase subunit 2 A, chloroplastic, found in Nicotiana tabacum (Common tobacco).